A 318-amino-acid chain; its full sequence is 2-keto-3-deoxygluconate permease (318 aa).

10 helical membrane passes run 10–30, 42–62, 82–102, 109–129, 139–159, 163–183, 201–221, 224–244, 257–277, and 289–309; these read LPGG…TLWP, GLIS…GATI, IAVA…GGVS, LSVL…YAAL, AGAV…LILG, LASF…LGFA, TLVP…TIAH, TSGV…LLLA, VAAS…AGMA, and ALVA…TALY.

Belongs to the KdgT transporter family.

Its subcellular location is the cell inner membrane. The catalysed reaction is 2-dehydro-3-deoxy-D-gluconate(in) + H(+)(in) = 2-dehydro-3-deoxy-D-gluconate(out) + H(+)(out). Its function is as follows. Catalyzes the proton-dependent uptake of 2-keto-3-deoxygluconate (KDG) into the cell. This chain is 2-keto-3-deoxygluconate permease, found in Xanthomonas axonopodis pv. citri (strain 306).